A 347-amino-acid polypeptide reads, in one-letter code: Ketol-acid reductoisomerase (NADP(+)) (347 aa).

The KARI N-terminal Rossmann domain maps to 1-185 (MKIYYDEDAN…GGTRAGVLET (185 aa)). Residues 24-27 (YGSQ), R47, S50, S52, and 82-85 (DEFQ) each bind NADP(+). H107 is an active-site residue. NADP(+) is bound at residue G133. One can recognise a KARI C-terminal knotted domain in the interval 186–336 (SFKEETETDL…AELRSKMKFL (151 aa)). Residues D194, E198, E230, and E234 each contribute to the Mg(2+) site. S255 lines the substrate pocket.

The protein belongs to the ketol-acid reductoisomerase family. Mg(2+) serves as cofactor.

It catalyses the reaction (2R)-2,3-dihydroxy-3-methylbutanoate + NADP(+) = (2S)-2-acetolactate + NADPH + H(+). The catalysed reaction is (2R,3R)-2,3-dihydroxy-3-methylpentanoate + NADP(+) = (S)-2-ethyl-2-hydroxy-3-oxobutanoate + NADPH + H(+). It participates in amino-acid biosynthesis; L-isoleucine biosynthesis; L-isoleucine from 2-oxobutanoate: step 2/4. It functions in the pathway amino-acid biosynthesis; L-valine biosynthesis; L-valine from pyruvate: step 2/4. Functionally, involved in the biosynthesis of branched-chain amino acids (BCAA). Catalyzes an alkyl-migration followed by a ketol-acid reduction of (S)-2-acetolactate (S2AL) to yield (R)-2,3-dihydroxy-isovalerate. In the isomerase reaction, S2AL is rearranged via a Mg-dependent methyl migration to produce 3-hydroxy-3-methyl-2-ketobutyrate (HMKB). In the reductase reaction, this 2-ketoacid undergoes a metal-dependent reduction by NADPH to yield (R)-2,3-dihydroxy-isovalerate. In Gamma-proteobacterium EBAC31A08, this protein is Ketol-acid reductoisomerase (NADP(+)).